Here is a 737-residue protein sequence, read N- to C-terminus: Envelope glycoprotein H (737 aa).

Residues 1–25 (MLIRRRALWLTIPILIIMTSHKIMC) form the signal peptide. Residues 26 to 702 (AFDLSHVHSE…NFFLFSSKSP (677 aa)) lie on the Virion surface side of the membrane. Asn62, Asn212, Asn365, Asn412, Asn448, Asn465, Asn544, Asn569, Asn603, and Asn683 each carry an N-linked (GlcNAc...) asparagine; by host glycan. The segment at 191-253 (GSVTLFGHIT…MMMYDDFEII (63 aa)) is interaction with gL. A helical membrane pass occupies residues 703 to 723 (GAIVLYIIIISLIVWTLYEII). The Intravirion segment spans residues 724 to 737 (KLFCYKRQWQYQKL).

The protein belongs to the herpesviridae glycoprotein H family. Interacts with glycoprotein L (gL); this interaction is necessary for the correct processing and cell surface expression of gH. The heterodimer gH/gL seems to interact with gB trimers during fusion. In terms of processing, N-glycosylated, O-glycosylated, and sialylated.

The protein resides in the virion membrane. The protein localises to the host cell membrane. It localises to the host endosome membrane. Functionally, the heterodimer glycoprotein H-glycoprotein L is required for the fusion of viral and plasma membranes leading to virus entry into the host cell. Following initial binding to host receptor, membrane fusion is mediated by the fusion machinery composed of gB and the heterodimer gH/gL. May also be involved in the fusion between the virion envelope and the outer nuclear membrane during virion morphogenesis. This is Envelope glycoprotein H from Elephantid herpesvirus 1 (isolate Asian elephant/Berlin/Kiba/1998) (EIHV-1).